We begin with the raw amino-acid sequence, 587 residues long: tRNA (guanine(37)-N(1))-methyltransferase 2 (587 aa).

S-adenosyl-L-methionine-binding positions include Arg360 and 430–431 (DA). A disordered region spans residues 446 to 469 (ASTRSRKEDVTNKDGNHVTPTEPM). Residues 450–461 (SRKEDVTNKDGN) are compositionally biased toward basic and acidic residues. An S-adenosyl-L-methionine-binding site is contributed by Asn478.

It belongs to the class I-like SAM-binding methyltransferase superfamily. TRM5/TYW2 family. In terms of assembly, monomer.

Its subcellular location is the mitochondrion matrix. It is found in the nucleus. The protein resides in the cytoplasm. The enzyme catalyses guanosine(37) in tRNA + S-adenosyl-L-methionine = N(1)-methylguanosine(37) in tRNA + S-adenosyl-L-homocysteine + H(+). Specifically methylates the N1 position of guanosine-37 in various cytoplasmic and mitochondrial tRNAs. Methylation is not dependent on the nature of the nucleoside 5' of the target nucleoside. This is the first step in the biosynthesis of wybutosine (yW), a modified base adjacent to the anticodon of tRNAs and required for accurate decoding. The chain is tRNA (guanine(37)-N(1))-methyltransferase 2 from Phaeodactylum tricornutum (strain CCAP 1055/1).